We begin with the raw amino-acid sequence, 498 residues long: Hexokinase-1 (498 aa).

Residues 4-24 (VTVGAAVVGAAAVCAVAALIV) traverse the membrane as a helical segment. Positions 35-488 (GRAMAILREF…SGIGAALLRA (454 aa)) constitute a Hexokinase domain. Residues 89–228 (QLVMKLGVFY…VLDMRVSALV (140 aa)) form a hexokinase small subdomain region. Residues glycine 104, threonine 105, and asparagine 106 each coordinate ADP. D-glucose-binding residues include threonine 194, lysine 195, asparagine 229, and aspartate 230. The hexokinase large subdomain stretch occupies residues 229-477 (NDTVGTLAGG…TSIVFVHSND (249 aa)). Threonine 253 contacts ADP. D-glucose is bound by residues asparagine 256, glutamate 284, and glutamate 315. Glycine 442 is a binding site for ADP.

Belongs to the hexokinase family. In terms of tissue distribution, expressed in young and mature leaves, stems, roots, stolons, and developing and mature tubers.

Its subcellular location is the plastid. It is found in the chloroplast outer membrane. It carries out the reaction a D-hexose + ATP = a D-hexose 6-phosphate + ADP + H(+). It catalyses the reaction D-fructose + ATP = D-fructose 6-phosphate + ADP + H(+). The catalysed reaction is D-glucose + ATP = D-glucose 6-phosphate + ADP + H(+). The protein operates within carbohydrate metabolism; hexose metabolism. Its pathway is carbohydrate degradation; glycolysis; D-glyceraldehyde 3-phosphate and glycerone phosphate from D-glucose: step 1/4. Functionally, fructose and glucose phosphorylating enzyme. May be involved in the phosphorylation of glucose during the export from plastids to cytosol. Seems neither to be involved in cell sugar sensing nor in carbohydrate metabolism in tuber. The chain is Hexokinase-1 (HXK1) from Solanum tuberosum (Potato).